The following is a 304-amino-acid chain: Ferredoxin fas2 (304 aa).

The region spanning 2-29 (KVVVNERRCFGSGQCVLVAPEVFEQSND) is the 4Fe-4S ferredoxin-type domain. Positions 10, 16, and 54 each coordinate [3Fe-4S] cluster. The tract at residues 66-304 (MRQEPTEFSY…QSARSSIQQR (239 aa)) is transketolase-like.

It in the C-terminal section; belongs to the transketolase family. It depends on [3Fe-4S] cluster as a cofactor.

Its function is as follows. Plays a role in electron transfer. The fas operon encodes genes involved in cytokinin production and in host plant fasciation (leafy gall). This is Ferredoxin fas2 (fas2) from Rhodococcoides fascians (Rhodococcus fascians).